The primary structure comprises 192 residues: Thiamine transporter ThiT (192 aa).

6 helical membrane-spanning segments follow: residues 10-30, 31-51, 57-77, 81-101, 123-143, and 164-184; these read LIEI…SGMF, LSMP…LISF, AGLT…NLFA, VQLL…GCFA, AVFI…AVFF, and YMVP…MTAP.

It belongs to the vitamin uptake transporter (VUT/ECF) (TC 2.A.88) family. Thiamine transporter subfamily. As to quaternary structure, forms a stable energy-coupling factor (ECF) transporter complex composed of a membrane-embedded substrate-binding protein (S component), two ATP-binding proteins (A components) and a transmembrane protein (T component).

The protein resides in the cell membrane. In terms of biological role, probably a thiamine-binding protein that interacts with the energy-coupling factor (ECF) ABC-transporter complex. Unlike classic ABC transporters this ECF transporter provides the energy necessary to transport a number of different substrates. The substrates themselves are bound by transmembrane, not extracytoplasmic soluble proteins. In Bacillus subtilis (strain 168), this protein is Thiamine transporter ThiT (thiT).